Consider the following 62-residue polypeptide: Large ribosomal subunit protein bL32 (62 aa).

Positions 1–16 (MAVQKNRKTRSKRGMR) are enriched in basic residues. The disordered stretch occupies residues 1–62 (MAVQKNRKTR…VISQGDSDDE (62 aa)). The segment covering 53–62 (VISQGDSDDE) has biased composition (polar residues).

The protein belongs to the bacterial ribosomal protein bL32 family.

This is Large ribosomal subunit protein bL32 from Alcanivorax borkumensis (strain ATCC 700651 / DSM 11573 / NCIMB 13689 / SK2).